We begin with the raw amino-acid sequence, 231 residues long: Class II histocompatibility antigen, B-L beta chain (231 aa).

Residues 1–89 form a beta-1 region; that stretch reads FFQWSATVEC…IVAPLTLQRR (89 aa). The Extracellular portion of the chain corresponds to 1–194; the sequence is FFQWSATVEC…PGDVSRSKLL (194 aa). Disulfide bonds link cysteine 10–cysteine 74 and cysteine 111–cysteine 167. Asparagine 14 is a glycosylation site (N-linked (GlcNAc...) asparagine). A beta-2 region spans residues 90 to 182; it reads EPKVRIFALQ…SLQQPITQRW (93 aa). In terms of domain architecture, Ig-like C1-type spans 91–179; it reads PKVRIFALQS…EHTSLQQPIT (89 aa). Positions 183-194 are connecting peptide; it reads EPPGDVSRSKLL. Residues 195-219 traverse the membrane as a helical segment; sequence MGVGGFVLGLVYLALGIFFFLCSKK. Residues 220 to 231 lie on the Cytoplasmic side of the membrane; sequence GQPDPTSPGILN.

It belongs to the MHC class II family.

The protein resides in the membrane. In Gallus gallus (Chicken), this protein is Class II histocompatibility antigen, B-L beta chain.